The following is a 1034-amino-acid chain: Glycine dehydrogenase (decarboxylating), mitochondrial (1034 aa).

The N-terminal 63 residues, 1-63, are a transit peptide targeting the mitochondrion; sequence MERARRLAML…LNGFGSQVRT (63 aa). Lys-770 is subject to N6-(pyridoxal phosphate)lysine.

Belongs to the GcvP family. Homodimer. The glycine cleavage system is composed of four proteins: P, T, L and H. Pyridoxal 5'-phosphate serves as cofactor.

It is found in the mitochondrion. It catalyses the reaction N(6)-[(R)-lipoyl]-L-lysyl-[glycine-cleavage complex H protein] + glycine + H(+) = N(6)-[(R)-S(8)-aminomethyldihydrolipoyl]-L-lysyl-[glycine-cleavage complex H protein] + CO2. Its function is as follows. The glycine cleavage system catalyzes the degradation of glycine. The P protein binds the alpha-amino group of glycine through its pyridoxal phosphate cofactor; CO(2) is released and the remaining methylamine moiety is then transferred to the lipoamide cofactor of the H protein. The protein is Glycine dehydrogenase (decarboxylating), mitochondrial (GDCSPA) of Flaveria trinervia (Clustered yellowtops).